A 265-amino-acid chain; its full sequence is F-box only protein 6 (265 aa).

One can recognise an F-box domain in the interval 3 to 50 (LVSINQLPENILLEVFMHVPARQLLRNCRPVCCLWRDLIDLVSLWKRK). Positions 71–252 (FYFLCSLRRN…VTNSSVVISH (182 aa)) constitute an FBA domain. Ser-251 is modified (phosphoserine).

In terms of assembly, part of a SCF (SKP1-cullin-F-box) protein ligase complex. Interacts with VCP, CHEK1 and CUL1.

Its subcellular location is the cytoplasm. Its pathway is protein modification; protein ubiquitination. Its function is as follows. Substrate-recognition component of some SCF (SKP1-CUL1-F-box protein)-type E3 ubiquitin ligase complexes. Involved in endoplasmic reticulum-associated degradation pathway (ERAD) for misfolded lumenal proteins by recognizing and binding sugar chains on unfolded glycoproteins that are retrotranslocated into the cytosol and promoting their ubiquitination and subsequent degradation. Able to recognize and bind denatured glycoproteins, which are modified with not only high-mannose but also complex-type oligosaccharides. Also recognizes sulfated glycans. Also involved in DNA damage response by specifically recognizing activated CHEK1 (phosphorylated on 'Ser-345'), promoting its ubiquitination and degradation. Ubiquitination of CHEK1 is required to ensure that activated CHEK1 does not accumulate as cells progress through S phase, or when replication forks encounter transient impediments during normal DNA replication. The chain is F-box only protein 6 (FBXO6) from Bos taurus (Bovine).